A 272-amino-acid polypeptide reads, in one-letter code: HMP-PP phosphatase (272 aa).

Catalysis depends on aspartate 8, which acts as the Nucleophile. Aspartate 8, aspartate 10, and aspartate 212 together coordinate Mg(2+).

It belongs to the HAD-like hydrolase superfamily. Cof family. Mg(2+) is required as a cofactor.

The catalysed reaction is 4-amino-2-methyl-5-(diphosphooxymethyl)pyrimidine + H2O = 4-amino-2-methyl-5-(phosphooxymethyl)pyrimidine + phosphate + H(+). Catalyzes the hydrolysis of 4-amino-2-methyl-5-hydroxymethylpyrimidine pyrophosphate (HMP-PP) to 4-amino-2-methyl-5-hydroxymethylpyrimidine phosphate (HMP-P). This Escherichia coli (strain K12 / MC4100 / BW2952) protein is HMP-PP phosphatase.